The chain runs to 398 residues: Argininosuccinate synthase (398 aa).

ATP-binding positions include Ala9–Ser17 and Ala36. Positions 87 and 92 each coordinate L-citrulline. Gly117 contributes to the ATP binding site. Thr119, Asn123, and Asp124 together coordinate L-aspartate. Asn123 lines the L-citrulline pocket. 5 residues coordinate L-citrulline: Arg127, Ser176, Ser185, Glu261, and Tyr273.

It belongs to the argininosuccinate synthase family. Type 1 subfamily. Homotetramer.

Its subcellular location is the cytoplasm. It carries out the reaction L-citrulline + L-aspartate + ATP = 2-(N(omega)-L-arginino)succinate + AMP + diphosphate + H(+). It functions in the pathway amino-acid biosynthesis; L-arginine biosynthesis; L-arginine from L-ornithine and carbamoyl phosphate: step 2/3. The sequence is that of Argininosuccinate synthase from Desulfotalea psychrophila (strain LSv54 / DSM 12343).